A 210-amino-acid chain; its full sequence is Thymidylate kinase (210 aa).

10–17 (GPEGAGKS) provides a ligand contact to ATP.

This sequence belongs to the thymidylate kinase family.

The catalysed reaction is dTMP + ATP = dTDP + ADP. In terms of biological role, phosphorylation of dTMP to form dTDP in both de novo and salvage pathways of dTTP synthesis. The polypeptide is Thymidylate kinase (Pseudomonas fluorescens (strain SBW25)).